Consider the following 200-residue polypeptide: RPW8-like protein 4 (200 aa).

Residues 1-157 (MPIAELAVIK…MKAIQVDQWT (157 aa)) form the RPW8 domain. A helical membrane pass occupies residues 7–29 (AVIKTVGGPLIAAALGVGAQVIY). Residues 70–127 (REVHESLTRLLEDAKSIIEKYWKLRWSRHVCRKYRYIKKLESIELELVRVAREIQVHQ) are a coiled coil.

The protein belongs to the plant RPW8 protein family.

The protein localises to the membrane. Its function is as follows. Probable disease resistance (R) protein. This chain is RPW8-like protein 4 (HR4), found in Arabidopsis thaliana (Mouse-ear cress).